A 317-amino-acid chain; its full sequence is Probable cell division protein WhiA (317 aa).

The segment at residues 275-308 is a DNA-binding region (H-T-H motif); the sequence is SLKELGEMLVPKVGKSGVNHRMRKIDELAEKLEE.

This sequence belongs to the WhiA family.

Involved in cell division and chromosome segregation. This Desulfitobacterium hafniense (strain DSM 10664 / DCB-2) protein is Probable cell division protein WhiA.